The sequence spans 97 residues: UPF0235 protein Daro_3887 (97 aa).

The protein belongs to the UPF0235 family.

The polypeptide is UPF0235 protein Daro_3887 (Dechloromonas aromatica (strain RCB)).